A 120-amino-acid polypeptide reads, in one-letter code: NAD(P)H-quinone oxidoreductase subunit 3, chloroplastic (120 aa).

A run of 3 helical transmembrane segments spans residues 9-29 (IFWT…SISG), 64-84 (MFAL…PWAM), and 88-108 (VLGV…VVGL).

Belongs to the complex I subunit 3 family. As to quaternary structure, NDH is composed of at least 16 different subunits, 5 of which are encoded in the nucleus.

It localises to the plastid. Its subcellular location is the chloroplast thylakoid membrane. The catalysed reaction is a plastoquinone + NADH + (n+1) H(+)(in) = a plastoquinol + NAD(+) + n H(+)(out). It catalyses the reaction a plastoquinone + NADPH + (n+1) H(+)(in) = a plastoquinol + NADP(+) + n H(+)(out). NDH shuttles electrons from NAD(P)H:plastoquinone, via FMN and iron-sulfur (Fe-S) centers, to quinones in the photosynthetic chain and possibly in a chloroplast respiratory chain. The immediate electron acceptor for the enzyme in this species is believed to be plastoquinone. Couples the redox reaction to proton translocation, and thus conserves the redox energy in a proton gradient. The protein is NAD(P)H-quinone oxidoreductase subunit 3, chloroplastic of Hordeum vulgare (Barley).